The sequence spans 456 residues: G-protein coupled receptor 39 (456 aa).

Topologically, residues 1-34 (MASSSGSNHICSRVIDHSHVPEFEVATWIKITLI) are extracellular. Intrachain disulfides connect Cys-11/Cys-191 and Cys-108/Cys-210. The Zn(2+) site is built by His-17 and His-19. A helical transmembrane segment spans residues 35 to 55 (LVYLIIFVVGILGNSVTIRVT). Over 56–69 (QVLQKKGYLQKEVT) the chain is Cytoplasmic. Residues 70–89 (DHMVSLACSDILVFLIGMPM) traverse the membrane as a helical segment. The Extracellular portion of the chain corresponds to 90–109 (EFYSIIWNPLTTPSYALSCK). The helical transmembrane segment at 110–131 (LHTFLFETCSYATLLHVLTLSF) threads the bilayer. Residues 132–151 (ERYIAICHPFKYKAVSGPRQ) lie on the Cytoplasmic side of the membrane. Residues 152 to 172 (VKLLIGFVWVTSALVALPLLF) traverse the membrane as a helical segment. Over 173-217 (AMGIEYPLVNVPTHKGLNCNLSRTRHHDEPGNSNMSICTNLSNRW) the chain is Extracellular. Asn-192 and Asn-206 each carry an N-linked (GlcNAc...) asparagine glycan. A helical transmembrane segment spans residues 218 to 242 (EVFQSSIFGAFAVYLVVLASVAFMC). Residues 243–283 (WNMMKVLMKSKQGTLAGTGPQLQLRKSESEESRTARRQTII) lie on the Cytoplasmic side of the membrane. A helical membrane pass occupies residues 284 to 305 (FLRLIVVTLAVCWMPNQIRRIM). Over 306-323 (AAAKPKHDWTRTYFRAYM) the chain is Extracellular. The chain crosses the membrane as a helical span at residues 324 to 344 (ILLPFSDTFFYLSSVVNPLLY). Residues 345–456 (NVSSQQFRKV…TENSLQEQEV (112 aa)) lie on the Cytoplasmic side of the membrane. Residue Ser-397 is modified to Phosphoserine. A disordered region spans residues 415-456 (FQTEAKPGEAKPQPLSPESPQTGSETKPAGSTTENSLQEQEV). The segment covering 430 to 456 (SPESPQTGSETKPAGSTTENSLQEQEV) has biased composition (polar residues).

The protein belongs to the G-protein coupled receptor 1 family. As to quaternary structure, interacts with HTR1A. Interacts with GALR1. In terms of tissue distribution, expression is detected in septumamygdala, parietal cells, enterocytes, neurons and pancreas, in peripheral organs such as the duodenum and kidney but not in the pituitary and hypothalamus.

The protein localises to the cell membrane. In terms of biological role, zinc-sensing receptor that can sense changes in extracellular Zn(2+), mediate Zn(2+) signal transmission, and participates in the regulation of numerous physiological processes including glucose homeostasis regulation, gastrointestinal mobility, hormone secretion and cell death. Activation by Zn(2+) in keratinocytes increases the intracellular concentration of Ca(2+) and activates the ERK/MAPK and PI3K/AKT signaling pathways leading to epithelial repair. Plays an essential role in normal wound healing by inducing the production of cytokines including the major inflammatory cytokine IL6 via the PKC/MAPK/CEBPB pathway. Regulates adipose tissue metabolism, especially lipolysis, and regulates the function of lipases, such as hormone-sensitive lipase and adipose triglyceride lipase. Plays a role in the inhibition of cell death and protects against oxidative, endoplasmic reticulum and mitochondrial stress by inducing secretion of the cytoprotective pigment epithelium-derived growth factor (PEDF) and probably other protective transcripts in a GNA13/RHOA/SRE-dependent manner. Forms dynamic heteroreceptor complexes with HTR1A and GALR1 depending on cell type or specific physiological states, resulting in signaling diversity: HTR1A-GPR39 shows additive increase in signaling along the serum response element (SRE) and NF-kappa-B pathways while GALR1 acts as an antagonist blocking SRE. The sequence is that of G-protein coupled receptor 39 (Gpr39) from Mus musculus (Mouse).